We begin with the raw amino-acid sequence, 283 residues long: E3 ubiquitin-protein ligase MARCHF5 (283 aa).

Residues 9–78 (VQQMLDRSCW…PQCNAEYLIV (70 aa)) form an RING-CH-type zinc finger. The Zn(2+) site is built by C17, C20, C36, C38, H46, C49, C68, and C71. 4 consecutive transmembrane segments (helical) span residues 102 to 122 (FAAA…YGAV), 142 to 162 (PLFL…GKMI), 212 to 232 (ILCG…LMFS), and 241 to 261 (TILG…YFKQ).

The protein localises to the mitochondrion outer membrane. The protein resides in the endoplasmic reticulum membrane. It catalyses the reaction S-ubiquitinyl-[E2 ubiquitin-conjugating enzyme]-L-cysteine + [acceptor protein]-L-lysine = [E2 ubiquitin-conjugating enzyme]-L-cysteine + N(6)-ubiquitinyl-[acceptor protein]-L-lysine.. Its pathway is protein modification; protein ubiquitination. Mitochondrial E3 ubiquitin-protein ligase that plays a crucial role in the control of mitochondrial morphology by acting as a positive regulator of mitochondrial fission. May play a role in the prevention of cell senescence acting as a regulator of mitochondrial quality control. The polypeptide is E3 ubiquitin-protein ligase MARCHF5 (marchf5) (Xenopus laevis (African clawed frog)).